Consider the following 361-residue polypeptide: Probable sugar phosphate/phosphate translocator At1g12500 (361 aa).

Position 2 is an N-acetylvaline (Val2). 9 consecutive transmembrane segments (helical) span residues 56-76 (TILT…VLLL), 90-110 (IFLT…VINI), 125-145 (FLKI…GNTS), 153-173 (FNQA…FLIT), 192-212 (IVLA…ICVA), 240-260 (LLLY…LYIE), 276-296 (LIIF…LTNF), 306-326 (TLQV…VLIF), and 329-349 (PVTV…VLYS). The EamA domain occupies 89–196 (PIFLTMTHML…PVVSGIVLAS (108 aa)).

It belongs to the TPT transporter family. TPT (TC 2.A.7.9) subfamily.

The protein localises to the membrane. In Arabidopsis thaliana (Mouse-ear cress), this protein is Probable sugar phosphate/phosphate translocator At1g12500.